We begin with the raw amino-acid sequence, 310 residues long: MSEIQEISKKEQYNLNKLQKRLRRNVGEAIADYNMIEEGDRIMVCLSGGKDSYTMLEILRNLQQSAPVNFSLVAVNLDQKQPGFPEHILPEYLSSLGVEYKIVEENTYGIVKEKIPEGKTTCSLCSRLRRGILYRTATELGATKIALGHHRDDILQTLFLNMFYGGKMKGMPPKLMSDDGKHIVIRPLAYCREKDIERFSQAKGFPIIPCNLCGSQPNLQRQVIADMLRDWDKRYPGRIETMFSAMQNVVPSHLCDTELFDFKGIHHGSEVVNGGDLAFDREEIPMMPAGWTPEDDAAPPMQRLDVLEIK.

The PP-loop motif motif lies at 47–52; that stretch reads SGGKDS. [4Fe-4S] cluster is bound by residues Cys-122, Cys-125, and Cys-213.

It belongs to the TtcA family. Homodimer. The cofactor is Mg(2+). Requires [4Fe-4S] cluster as cofactor.

The protein localises to the cytoplasm. It catalyses the reaction cytidine(32) in tRNA + S-sulfanyl-L-cysteinyl-[cysteine desulfurase] + AH2 + ATP = 2-thiocytidine(32) in tRNA + L-cysteinyl-[cysteine desulfurase] + A + AMP + diphosphate + H(+). It participates in tRNA modification. Catalyzes the ATP-dependent 2-thiolation of cytidine in position 32 of tRNA, to form 2-thiocytidine (s(2)C32). The sulfur atoms are provided by the cysteine/cysteine desulfurase (IscS) system. In Cronobacter sakazakii (strain ATCC BAA-894) (Enterobacter sakazakii), this protein is tRNA-cytidine(32) 2-sulfurtransferase.